We begin with the raw amino-acid sequence, 264 residues long: CD320 antigen (264 aa).

The signal sequence occupies residues 1–28 (MARCGAGRAAALGLVLRLLLGLRTGPEA). Residues 50–87 (SCPTDTFKCLTSGYCVPLSWRCDGDRDCSDGSDEEECR) form the LDL-receptor class A 1 domain. 3 cysteine pairs are disulfide-bonded: cysteine 51/cysteine 64, cysteine 58/cysteine 77, and cysteine 71/cysteine 86. Ca(2+) is bound by residues tryptophan 69, aspartate 72, aspartate 74, aspartate 76, aspartate 82, and glutamate 83. The N-linked (GlcNAc...) asparagine glycan is linked to asparagine 122. The LDL-receptor class A 2 domain occupies 127–164 (PCQEGELRCILDDVCIPHTWRCDGHPDCPDSSDELSCD). Disulfide bonds link cysteine 128–cysteine 141, cysteine 135–cysteine 154, and cysteine 148–cysteine 163. Ca(2+) is bound by residues tryptophan 146, aspartate 149, histidine 151, aspartate 153, aspartate 159, and glutamate 160. Asparagine 195 carries N-linked (GlcNAc...) asparagine glycosylation. The chain crosses the membrane as a helical span at residues 213-233 (VIAAAGVLSAILVSATILILL).

In terms of assembly, interacts (via LDL-receptor class A domains) with TCN2.

It localises to the cell membrane. Its function is as follows. Receptor for transcobalamin saturated with cobalamin (TCbl). Plays an important role in cobalamin uptake. Plasma membrane protein that is expressed on follicular dendritic cells (FDC) and mediates interaction with germinal center B cells. Functions as a costimulator to promote B cell responses to antigenic stimuli; promotes B cell differentiation and proliferation. Germinal center-B (GC-B) cells differentiate into memory B-cells and plasma cells (PC) through interaction with T-cells and follicular dendritic cells (FDC). CD320 augments the proliferation of PC precursors generated by IL-10. This chain is CD320 antigen (Cd320), found in Rattus norvegicus (Rat).